The chain runs to 283 residues: Pantothenate synthetase (283 aa).

26–33 serves as a coordination point for ATP; it reads MGNLHEGH. The active-site Proton donor is the histidine 33. Glutamine 57 serves as a coordination point for (R)-pantoate. Glutamine 57 lines the beta-alanine pocket. ATP is bound at residue 144 to 147; sequence GKKD. Position 150 (glutamine 150) interacts with (R)-pantoate. ATP contacts are provided by residues valine 173 and 181–184; that span reads LSSR.

This sequence belongs to the pantothenate synthetase family. Homodimer.

It localises to the cytoplasm. The catalysed reaction is (R)-pantoate + beta-alanine + ATP = (R)-pantothenate + AMP + diphosphate + H(+). It functions in the pathway cofactor biosynthesis; (R)-pantothenate biosynthesis; (R)-pantothenate from (R)-pantoate and beta-alanine: step 1/1. In terms of biological role, catalyzes the condensation of pantoate with beta-alanine in an ATP-dependent reaction via a pantoyl-adenylate intermediate. The protein is Pantothenate synthetase of Ralstonia pickettii (strain 12J).